The sequence spans 309 residues: Taste receptor type 2 member 20 (309 aa).

At 1–6 (MMSFLH) the chain is on the extracellular side. Residues 7 to 27 (IVFSILVVVAFILGNFANGFI) traverse the membrane as a helical segment. Over 28 to 46 (ALINFIAWVKRQKISSADQ) the chain is Cytoplasmic. A helical transmembrane segment spans residues 47 to 67 (IIAALAVSRVGLLWVILLHWY). Residues 68–79 (STVLNPTSSNLK) lie on the Extracellular side of the membrane. The chain crosses the membrane as a helical span at residues 80-100 (VIIFISNAWAVTNHFSIWLAT). Residues 101–125 (SLSIFYLLKIVNFSRLIFHHLKRKA) lie on the Cytoplasmic side of the membrane. A helical transmembrane segment spans residues 126 to 146 (KSVVLVIVLGSLFFLVCHLVM). Topologically, residues 147-178 (KNTYINVWTEECEGNVTWKIKLRNAMHLSNLT) are extracellular. A helical membrane pass occupies residues 179 to 199 (VAMLANLIPFTLTLISFLLLI). The Cytoplasmic segment spans residues 200-229 (YSLCKHLKKMQLHGKGSQDPSTKIHIKALQ). The helical transmembrane segment at 230–250 (TVTSFLILLAIYFLCLITSFW) threads the bilayer. Residues 251-259 (NSKMRPKEI) lie on the Extracellular side of the membrane. Residues 260–280 (VLMLCQAFGIIYPSFHSFILI) traverse the membrane as a helical segment. Residues 281 to 309 (WGNKTLKQTFLSVLWQVTCWAKGQNQSTP) lie on the Cytoplasmic side of the membrane.

It belongs to the G-protein coupled receptor T2R family.

The protein resides in the membrane. Receptor that may play a role in the perception of bitterness and is gustducin-linked. May play a role in sensing the chemical composition of the gastrointestinal content. The activity of this receptor may stimulate alpha gustducin, mediate PLC-beta-2 activation and lead to the gating of TRPM5. The protein is Taste receptor type 2 member 20 (TAS2R20) of Pan paniscus (Pygmy chimpanzee).